The chain runs to 532 residues: Putative 57 kDa heat shock protein (532 aa).

SHSP domains lie at 25–134 (VNGP…CKIT) and 439–532 (SVLE…IPSN).

Belongs to the small heat shock protein (HSP20) family.

The chain is Putative 57 kDa heat shock protein from Arabidopsis thaliana (Mouse-ear cress).